Reading from the N-terminus, the 1076-residue chain is DNA-directed RNA polymerase subunit beta (1076 aa).

The protein belongs to the RNA polymerase beta chain family. In plastids the minimal PEP RNA polymerase catalytic core is composed of four subunits: alpha, beta, beta', and beta''. When a (nuclear-encoded) sigma factor is associated with the core the holoenzyme is formed, which can initiate transcription.

It localises to the plastid. It is found in the chloroplast. It carries out the reaction RNA(n) + a ribonucleoside 5'-triphosphate = RNA(n+1) + diphosphate. In terms of biological role, DNA-dependent RNA polymerase catalyzes the transcription of DNA into RNA using the four ribonucleoside triphosphates as substrates. This is DNA-directed RNA polymerase subunit beta from Lolium perenne (Perennial ryegrass).